Here is a 303-residue protein sequence, read N- to C-terminus: Quinolinate synthase (303 aa).

The iminosuccinate site is built by histidine 25 and serine 42. Cysteine 87 is a [4Fe-4S] cluster binding site. Iminosuccinate-binding positions include 113–115 and serine 130; that span reads YVN. Position 173 (cysteine 173) interacts with [4Fe-4S] cluster. Residues 199 to 201 and threonine 216 contribute to the iminosuccinate site; that span reads HPE. Cysteine 261 is a binding site for [4Fe-4S] cluster.

It belongs to the quinolinate synthase family. Type 2 subfamily. The cofactor is [4Fe-4S] cluster.

Its subcellular location is the cytoplasm. The enzyme catalyses iminosuccinate + dihydroxyacetone phosphate = quinolinate + phosphate + 2 H2O + H(+). The protein operates within cofactor biosynthesis; NAD(+) biosynthesis; quinolinate from iminoaspartate: step 1/1. Catalyzes the condensation of iminoaspartate with dihydroxyacetone phosphate to form quinolinate. This chain is Quinolinate synthase, found in Desulforudis audaxviator (strain MP104C).